The following is a 383-amino-acid chain: Acetylornithine deacetylase (383 aa).

Zn(2+) is bound at residue His-80. Asp-82 is an active-site residue. Asp-112 contributes to the Zn(2+) binding site. Glu-144 is a catalytic residue. Zn(2+)-binding residues include Glu-145, Glu-169, and His-355.

The protein belongs to the peptidase M20A family. ArgE subfamily. Homodimer. Requires Zn(2+) as cofactor. Co(2+) is required as a cofactor. Glutathione serves as cofactor.

The protein localises to the cytoplasm. It catalyses the reaction N(2)-acetyl-L-ornithine + H2O = L-ornithine + acetate. The protein operates within amino-acid biosynthesis; L-arginine biosynthesis; L-ornithine from N(2)-acetyl-L-ornithine (linear): step 1/1. In terms of biological role, catalyzes the hydrolysis of the amide bond of N(2)-acetylated L-amino acids. Cleaves the acetyl group from N-acetyl-L-ornithine to form L-ornithine, an intermediate in L-arginine biosynthesis pathway, and a branchpoint in the synthesis of polyamines. The sequence is that of Acetylornithine deacetylase from Shigella boydii serotype 4 (strain Sb227).